A 405-amino-acid polypeptide reads, in one-letter code: uncharacterized protein (405 aa).

Helical transmembrane passes span Val9 to Val29, Val41 to Cys61, Val74 to Thr94, Gln98 to Phe118, Ala138 to Gly158, Leu168 to Asn190, Ala227 to His247, Trp252 to Ile272, Leu291 to Leu311, and Ile373 to Pro393.

Belongs to the major facilitator superfamily. Drug:H(+) antiporter-3 (DHA3) (TC 2.A.1.21) family.

It localises to the cell membrane. This is an uncharacterized protein from Bacillus subtilis (strain 168).